A 351-amino-acid chain; its full sequence is uncharacterized protein (351 aa).

Mn(2+)-binding residues include Asp-215, Asp-226, His-290, Glu-319, and Glu-333.

It belongs to the peptidase M24B family. Requires Mn(2+) as cofactor.

This is an uncharacterized protein from Staphylococcus aureus (strain MW2).